The following is a 544-amino-acid chain: T-complex protein 1 subunit gamma (544 aa).

A disulfide bond links cysteine 368 and cysteine 374. Residues 525–544 (SKKRGGNEPTNPAAMAQGQE) form a disordered region.

The protein belongs to the TCP-1 chaperonin family. Heterooligomeric complex of about 850 to 900 kDa that forms two stacked rings, 12 to 16 nm in diameter.

It localises to the cytoplasm. Functionally, molecular chaperone; assists the folding of proteins upon ATP hydrolysis. Known to play a role, in vitro, in the folding of actin and tubulin. The sequence is that of T-complex protein 1 subunit gamma from Drosophila melanogaster (Fruit fly).